Here is a 417-residue protein sequence, read N- to C-terminus: MKKLEVFGAAKLKGQIRISGSKNASLPILAATLLSNKKISLANLPRVKDIETMILLLKSLGSIIEDNKKELIIKNTKQTKTFAAYSLVKTMRAGILVLGPLLAKFGKAKVSLPGGCAIGTRPVDIHLQALSKLGVKYKIIQGYVHANAPKGLIGANIKFPKVSVGATENLIIAACLAKGKTTLSNCAIEPEIKDLVNFLINMGCNIKWTAKRTVRIEGVNNLKELDYSVMPDRIEAGTYLIAAALTEGNLKITGIDPKIISTEINILKKVGSKITLKKNEILIQGSKKIKNINIKTSPYPGFPTDLQAQMMVLLCKANKRSHIKEEIFENRFMHVAELNRMGAKISINGNQASIEGNIKFEAAELMATDLRASVSLILAALAAKGKSVINRIYHLDRGYEDIEKKLKKVGAKIKRIN.

22–23 (KN) contributes to the phosphoenolpyruvate binding site. Arg92 lines the UDP-N-acetyl-alpha-D-glucosamine pocket. Cys116 (proton donor) is an active-site residue. Cys116 bears the 2-(S-cysteinyl)pyruvic acid O-phosphothioketal mark. UDP-N-acetyl-alpha-D-glucosamine-binding positions include 161-164 (KVSV), Asp305, and Ile327.

It belongs to the EPSP synthase family. MurA subfamily.

It localises to the cytoplasm. It catalyses the reaction phosphoenolpyruvate + UDP-N-acetyl-alpha-D-glucosamine = UDP-N-acetyl-3-O-(1-carboxyvinyl)-alpha-D-glucosamine + phosphate. It functions in the pathway cell wall biogenesis; peptidoglycan biosynthesis. Functionally, cell wall formation. Adds enolpyruvyl to UDP-N-acetylglucosamine. The chain is UDP-N-acetylglucosamine 1-carboxyvinyltransferase from Pelagibacter ubique (strain HTCC1062).